A 175-amino-acid polypeptide reads, in one-letter code: Apoptosis regulator Bcl-2 homolog (175 aa).

The mediates interaction with human NOP53 and localization to host nucleolus stretch occupies residues 37 to 42 (KLYITG). A helical membrane pass occupies residues 153 to 173 (MTALLGSIALLATILAAVAMS).

It belongs to the Bcl-2 family. Interacts with human NOP53; may sequester ORF16 in host nucleolus and reduce its antiapoptotic activity. Interacts with ORF55.

Its subcellular location is the host membrane. It is found in the host mitochondrion. The protein localises to the host nucleus. The protein resides in the host nucleolus. In terms of biological role, plays a role in the protection against apoptosis mediated by cytotoxic cells during the immune response to acute and persistent viral infection. Contributes therefore to latency establishment. Also plays a role in the inhibition of host starvation-induced autophagy which ultimately contributes to the viral chronic infection. Also participates in the viral genome replication within host nucleus. The chain is Apoptosis regulator Bcl-2 homolog (vBCL2) from Homo sapiens (Human).